The following is a 288-amino-acid chain: Small ribosomal subunit protein uS2 (288 aa).

The segment at R228 to A288 is disordered. Over residues Q257 to A288 the composition is skewed to low complexity.

It belongs to the universal ribosomal protein uS2 family.

This Rhodococcus opacus (strain B4) protein is Small ribosomal subunit protein uS2.